The chain runs to 292 residues: uncharacterized protein (292 aa).

Residues threonine 43 and tyrosine 105 each act as charge relay system in the active site. The Proton donor role is filled by tyrosine 131. The Schiff-base intermediate with substrate role is filled by lysine 159.

Belongs to the DapA family. As to quaternary structure, homotetramer.

It localises to the cytoplasm. This is an uncharacterized protein from Thermococcus kodakarensis (strain ATCC BAA-918 / JCM 12380 / KOD1) (Pyrococcus kodakaraensis (strain KOD1)).